We begin with the raw amino-acid sequence, 785 residues long: Endonuclease MutS2 (785 aa).

335-342 (GPNTGGKT) serves as a coordination point for ATP. Residues 710 to 785 (LDLRGERYED…GNGVTIVEFK (76 aa)) form the Smr domain.

This sequence belongs to the DNA mismatch repair MutS family. MutS2 subfamily. Homodimer. Binds to stalled ribosomes, contacting rRNA.

Its function is as follows. Endonuclease that is involved in the suppression of homologous recombination and thus may have a key role in the control of bacterial genetic diversity. In terms of biological role, acts as a ribosome collision sensor, splitting the ribosome into its 2 subunits. Detects stalled/collided 70S ribosomes which it binds and splits by an ATP-hydrolysis driven conformational change. Acts upstream of the ribosome quality control system (RQC), a ribosome-associated complex that mediates the extraction of incompletely synthesized nascent chains from stalled ribosomes and their subsequent degradation. Probably generates substrates for RQC. This Listeria innocua serovar 6a (strain ATCC BAA-680 / CLIP 11262) protein is Endonuclease MutS2.